The sequence spans 848 residues: Probable serine/threonine-protein kinase DDB_G0278535 (848 aa).

Composition is skewed to low complexity over residues 1 to 52 (MNKS…NNNH), 60 to 85 (TAATTTTSTTGTGTTAATTSTSTSST), and 95 to 116 (TSNSNLATATNTPSSSPQVSTS). Residues 1-117 (MNKSSSASTV…SSSPQVSTSV (117 aa)) are disordered. ANK repeat units follow at residues 181 to 212 (MDQTPLCAALRNGSHDIVREILFFYQSNKMDI), 218 to 248 (SGYTPLHVAASHCDDQILMLLLNYEGINVNI), 252 to 285 (DKNSALHYFCQKFRSPNCQEPFSIFLKKGVNVNA), 289 to 320 (NGETPLHKSIFNNTVRLLMVNMLLDAGAEVNV), and 324 to 353 (RGESPLHFAVRLGREDLVSVLVKAGADITI). Residues 378–441 (KNVQDIFNWL…IRNCRILRDQ (64 aa)) enclose the SAM domain. The interval 448-478 (NSNVTTGSGSSGSTTTTTTTTTTTSGCGGLN) is disordered. Residues 452-472 (TTGSGSSGSTTTTTTTTTTTS) show a composition bias toward low complexity. In terms of domain architecture, Protein kinase spans 529 to 799 (LEYTLKLGSG…TLNRLRHEYM (271 aa)). Residues 535 to 543 (LGSGSSGKV) and Lys-556 each bind ATP. Asp-650 serves as the catalytic Proton acceptor. The segment at 810–848 (RKLPSLSPPPQPTTTTTTTTSSSTSTNNINNNINNNNNT) is disordered. Low complexity predominate over residues 822-848 (TTTTTTTTSSSTSTNNINNNINNNNNT).

This sequence belongs to the protein kinase superfamily. TKL Ser/Thr protein kinase family.

It catalyses the reaction L-seryl-[protein] + ATP = O-phospho-L-seryl-[protein] + ADP + H(+). It carries out the reaction L-threonyl-[protein] + ATP = O-phospho-L-threonyl-[protein] + ADP + H(+). This chain is Probable serine/threonine-protein kinase DDB_G0278535, found in Dictyostelium discoideum (Social amoeba).